Here is a 545-residue protein sequence, read N- to C-terminus: Eukaryotic translation initiation factor 3 subunit D-2 (545 aa).

Residues Phe94 to Gly148 form a disordered region. The span at Gln95–Thr113 shows a compositional bias: basic residues. Residues Gly114–Pro127 show a composition bias toward gly residues. Over residues Glu133–Arg145 the composition is skewed to basic and acidic residues. An RNA gate region spans residues Gln287–Pro301.

It belongs to the eIF-3 subunit D family. Component of the eukaryotic translation initiation factor 3 (eIF-3) complex. The eIF-3 complex interacts with pix.

It is found in the cytoplasm. In terms of biological role, mRNA cap-binding component of the eukaryotic translation initiation factor 3 (eIF-3) complex, which is involved in protein synthesis of a specialized repertoire of mRNAs and, together with other initiation factors, stimulates binding of mRNA and methionyl-tRNAi to the 40S ribosome. The eIF-3 complex specifically targets and initiates translation of a subset of mRNAs involved in cell proliferation. In the eIF-3 complex, eif3d specifically recognizes and binds the 7-methylguanosine cap of a subset of mRNAs. The protein is Eukaryotic translation initiation factor 3 subunit D-2 of Drosophila pseudoobscura pseudoobscura (Fruit fly).